Consider the following 550-residue polypeptide: Protein UshA (550 aa).

Residues 1–25 (MRFSLSTTAAALAVSLAFAPGWAVA) form the signal peptide. A divalent metal cation is bound by residues Asp-41, His-43, Asp-84, Asn-116, His-217, His-252, and Gln-254. An intrachain disulfide couples Cys-258 to Cys-275. Substrate is bound by residues 375–379 (RSKVR) and 498–504 (FNALGGD).

This sequence belongs to the 5'-nucleotidase family. Co(2+) is required as a cofactor.

It localises to the periplasm. It carries out the reaction UDP-sugar + H2O = UMP + alpha-D-aldose 1-phosphate.. The catalysed reaction is a ribonucleoside 5'-phosphate + H2O = a ribonucleoside + phosphate. Degradation of external UDP-glucose to uridine monophosphate and glucose-1-phosphate, which can then be used by the cell. This is Protein UshA (ushA) from Yersinia enterocolitica serotype O:8 / biotype 1B (strain NCTC 13174 / 8081).